Here is a 476-residue protein sequence, read N- to C-terminus: Proline--tRNA ligase (476 aa).

This sequence belongs to the class-II aminoacyl-tRNA synthetase family. ProS type 3 subfamily. In terms of assembly, homodimer.

The protein localises to the cytoplasm. It catalyses the reaction tRNA(Pro) + L-proline + ATP = L-prolyl-tRNA(Pro) + AMP + diphosphate. Functionally, catalyzes the attachment of proline to tRNA(Pro) in a two-step reaction: proline is first activated by ATP to form Pro-AMP and then transferred to the acceptor end of tRNA(Pro). This is Proline--tRNA ligase from Rubrobacter xylanophilus (strain DSM 9941 / JCM 11954 / NBRC 16129 / PRD-1).